The sequence spans 117 residues: G antigen 12J (117 aa).

Residues 1–117 form a disordered region; it reads MSWRGRSTYY…PEEGEKQSQC (117 aa). Composition is skewed to acidic residues over residues 32 to 45 and 87 to 96; these read FSDEVEPATPEEGE and ECEDGPDGQE. The segment covering 103 to 117 has biased composition (basic and acidic residues); sequence EEVKTPEEGEKQSQC.

It belongs to the GAGE family.

The polypeptide is G antigen 12J (GAGE12J) (Homo sapiens (Human)).